Consider the following 394-residue polypeptide: Carbamoyl phosphate synthase small chain (394 aa).

The tract at residues 1-188 is CPSase; it reads MIRKERAILA…PLPYAFPTLR (188 aa). L-glutamine is bound by residues Ser49, Gly240, and Gly242. Positions 192–379 constitute a Glutamine amidotransferase type-1 domain; sequence RVVLMDFGIK…IEEIDAFEGA (188 aa). Cys267 functions as the Nucleophile in the catalytic mechanism. Residues Leu268, Gln271, Asn309, Gly311, and Tyr312 each contribute to the L-glutamine site. Residues His352 and Glu354 contribute to the active site.

Belongs to the CarA family. Composed of two chains; the small (or glutamine) chain promotes the hydrolysis of glutamine to ammonia, which is used by the large (or ammonia) chain to synthesize carbamoyl phosphate. Tetramer of heterodimers (alpha,beta)4.

The enzyme catalyses hydrogencarbonate + L-glutamine + 2 ATP + H2O = carbamoyl phosphate + L-glutamate + 2 ADP + phosphate + 2 H(+). It carries out the reaction L-glutamine + H2O = L-glutamate + NH4(+). It functions in the pathway amino-acid biosynthesis; L-arginine biosynthesis; carbamoyl phosphate from bicarbonate: step 1/1. It participates in pyrimidine metabolism; UMP biosynthesis via de novo pathway; (S)-dihydroorotate from bicarbonate: step 1/3. Functionally, small subunit of the glutamine-dependent carbamoyl phosphate synthetase (CPSase). CPSase catalyzes the formation of carbamoyl phosphate from the ammonia moiety of glutamine, carbonate, and phosphate donated by ATP, constituting the first step of 2 biosynthetic pathways, one leading to arginine and/or urea and the other to pyrimidine nucleotides. The small subunit (glutamine amidotransferase) binds and cleaves glutamine to supply the large subunit with the substrate ammonia. This Deinococcus geothermalis (strain DSM 11300 / CIP 105573 / AG-3a) protein is Carbamoyl phosphate synthase small chain.